The chain runs to 540 residues: Phenylalanine--tRNA ligase beta subunit (540 aa).

In terms of domain architecture, B5 spans 268–343 (LQHKSIKITA…ITYGYNNLSP (76 aa)). The Mg(2+) site is built by Asp321, Asp327, Glu330, and Glu331.

Belongs to the phenylalanyl-tRNA synthetase beta subunit family. Type 2 subfamily. In terms of assembly, tetramer of two alpha and two beta subunits. Mg(2+) is required as a cofactor.

It is found in the cytoplasm. It catalyses the reaction tRNA(Phe) + L-phenylalanine + ATP = L-phenylalanyl-tRNA(Phe) + AMP + diphosphate + H(+). This chain is Phenylalanine--tRNA ligase beta subunit, found in Sulfurisphaera tokodaii (strain DSM 16993 / JCM 10545 / NBRC 100140 / 7) (Sulfolobus tokodaii).